A 352-amino-acid polypeptide reads, in one-letter code: Histidine biosynthesis bifunctional protein HisB (352 aa).

The interval 1 to 163 (MKKILFIDRD…MVASAIINDA (163 aa)) is histidinol-phosphatase. Catalysis depends on aspartate 8, which acts as the Nucleophile. The Mg(2+) site is built by aspartate 8 and aspartate 10. Catalysis depends on aspartate 10, which acts as the Proton donor. Cysteine 91, histidine 93, cysteine 99, and cysteine 101 together coordinate Zn(2+). Aspartate 128 serves as a coordination point for Mg(2+). Positions 164-352 (RKASVQRKTK…NYLPSTKGVL (189 aa)) are imidazoleglycerol-phosphate dehydratase.

In the N-terminal section; belongs to the histidinol-phosphatase family. This sequence in the C-terminal section; belongs to the imidazoleglycerol-phosphate dehydratase family. Mg(2+) serves as cofactor. The cofactor is Zn(2+).

It is found in the cytoplasm. It carries out the reaction D-erythro-1-(imidazol-4-yl)glycerol 3-phosphate = 3-(imidazol-4-yl)-2-oxopropyl phosphate + H2O. The catalysed reaction is L-histidinol phosphate + H2O = L-histidinol + phosphate. It functions in the pathway amino-acid biosynthesis; L-histidine biosynthesis; L-histidine from 5-phospho-alpha-D-ribose 1-diphosphate: step 6/9. Its pathway is amino-acid biosynthesis; L-histidine biosynthesis; L-histidine from 5-phospho-alpha-D-ribose 1-diphosphate: step 8/9. This Legionella pneumophila (strain Lens) protein is Histidine biosynthesis bifunctional protein HisB.